The chain runs to 293 residues: Transcription elongation factor S-II (293 aa).

One can recognise a TFIIS N-terminal domain in the interval 4 to 81 (ADIRSAKAAL…KKWKADVSKG (78 aa)). The disordered stretch occupies residues 81–123 (GRPLKTTTTTSSTPSKHADVGSQAQKQVQKQSSSGQRTFKSDN). A compositionally biased stretch (low complexity) spans 100–116 (VGSQAQKQVQKQSSSGQ). Residues 133–248 (IRNNCIGLMY…HAQGAKPQKA (116 aa)) form the TFIIS central domain. A TFIIS-type zinc finger spans residues 251–291 (DLFTCGKCKQKKVSYYQMQTRSADEPMTTFCECTVCGNRWK). Residues Cys255, Cys258, Cys283, and Cys286 each coordinate Zn(2+).

Belongs to the TFS-II family.

The protein localises to the nucleus. Functionally, necessary for efficient RNA polymerase II transcription elongation past template-encoded arresting sites. The arresting sites in DNA have the property of trapping a certain fraction of elongating RNA polymerases that pass through, resulting in locked ternary complexes. Cleavage of the nascent transcript by S-II allows the resumption of elongation from the new 3'-terminus. The chain is Transcription elongation factor S-II (tfs1) from Schizosaccharomyces pombe (strain 972 / ATCC 24843) (Fission yeast).